A 238-amino-acid polypeptide reads, in one-letter code: Ribonuclease PH (238 aa).

Phosphate-binding positions include arginine 86 and 124–126 (GTR).

The protein belongs to the RNase PH family. In terms of assembly, homohexameric ring arranged as a trimer of dimers.

It carries out the reaction tRNA(n+1) + phosphate = tRNA(n) + a ribonucleoside 5'-diphosphate. Its function is as follows. Phosphorolytic 3'-5' exoribonuclease that plays an important role in tRNA 3'-end maturation. Removes nucleotide residues following the 3'-CCA terminus of tRNAs; can also add nucleotides to the ends of RNA molecules by using nucleoside diphosphates as substrates, but this may not be physiologically important. Probably plays a role in initiation of 16S rRNA degradation (leading to ribosome degradation) during starvation. The sequence is that of Ribonuclease PH from Salmonella agona (strain SL483).